A 467-amino-acid chain; its full sequence is Ammonium transporter Rh type C (467 aa).

At 1 to 3 the chain is on the cytoplasmic side; that stretch reads MRL. The helical transmembrane segment at 4-24 threads the bilayer; sequence RLPVVCFLWEIAMIVLFGIFV. Over 25–55 the chain is Extracellular; that stretch reads RYNDEADPHWSEFMKAQNITSDIQNDYYFRY. Residue Asn42 is glycosylated (N-linked (GlcNAc...) asparagine). The helical transmembrane segment at 56 to 76 threads the bilayer; sequence PSFQDVHVMIFVGFGFLMTFL. Topologically, residues 77 to 80 are cytoplasmic; that stretch reads KRYG. Residues 81 to 101 traverse the membrane as a helical segment; the sequence is FGSVAFNFLLAAFGIQWAILM. Residues 102–119 are Extracellular-facing; sequence QGWFHTFKNGKILIGVES. Residues 120–139 traverse the membrane as a helical segment; that stretch reads LINADFCVGSVCIAFGAILG. Topologically, residues 140-145 are cytoplasmic; sequence KVSPVQ. A helical transmembrane segment spans residues 146–168; the sequence is IMVMTLFQVTLFAVNEWILLNLL. Residues 169–173 are Extracellular-facing; it reads HVNDA. A helical membrane pass occupies residues 174–194; that stretch reads GGSMTIHTFGAYFGLTVAWIL. The Cytoplasmic segment spans residues 195-213; the sequence is NRPRLKQTNDKEGSVYVSD. A helical membrane pass occupies residues 214 to 234; the sequence is LFSMIGTLFLWMFWPSFNSAV. Over 235–245 the chain is Extracellular; it reads SYHGDAQHRAA. A helical transmembrane segment spans residues 246-266; it reads INTYCSLAACVLTTVAISSVV. Topologically, residues 267–271 are cytoplasmic; sequence NKKGK. The chain crosses the membrane as a helical span at residues 272–292; that stretch reads LEMVHIQNATLAGGVAVGTAA. Over 293-295 the chain is Extracellular; sequence EMM. The chain crosses the membrane as a helical span at residues 296–316; that stretch reads LTPYGSLIVGFICGIVSTLGF. Residues 317-337 lie on the Cytoplasmic side of the membrane; that stretch reads TYCSPFLSNKLRLHDTCGIHN. Residues 338–358 traverse the membrane as a helical segment; sequence LHAMPGLIGGIVGAVTAACAT. The Extracellular segment spans residues 359 to 390; it reads EAVYTADGLKKMFRFEGDYATRTPSMQGGYQA. The chain crosses the membrane as a helical span at residues 391–411; that stretch reads AGLCVSLAFGLVGGTVVGCIL. At 412-467 the chain is on the cytoplasmic side; that stretch reads KLPIWGDPSDENCFDDEVYWELPEEDEEEHLGAANQYVTHLPENFKLPDRTEVAFK.

This sequence belongs to the ammonium transporter (TC 2.A.49) family. Rh subfamily. Homotrimer.

Its subcellular location is the apical cell membrane. Functionally, functions as an ammonia transporter. The chain is Ammonium transporter Rh type C (rhcg) from Xenopus tropicalis (Western clawed frog).